A 325-amino-acid chain; its full sequence is MSSSNKNWPSMFKSKPCNNNHHHQHEIDTPSYMHYSNCNLSSSFSSDRIPDPKPRWNPKPEQIRILESIFNSGTINPPREEIQRIRIRLQEYGQIGDANVFYWFQNRKSRAKHKLRVHHKSPKMSKKDKTVIPSTDADHCFGFVNQETGLYPVQNNELVVTEPAGFLFPVHNDPSAAQSAFGFGDFVVPVVTEEGMAFSTVNNGVNLETNENFDKIPAINLYGGDGNGGGNCFPPLTVPLTINQSQEKRDVGLSGGEDVGDNVYPVRMTVFINEMPIEVVSGLFNVKAAFGNDAVLINSFGQPILTDEFGVTYQPLQNGAIYYLI.

Residues 51–115 (DPKPRWNPKP…NRKSRAKHKL (65 aa)) constitute a DNA-binding region (homeobox; WUS-type).

The protein belongs to the WUS homeobox family. Expressed only in the egg cell. Not detected in the pollen tube. Expressed in the zygote, the basal cell, and later the suspensor. Expressed in all suspensor cells, except the hypophysis, and in the embryo surrounding region (ESR) endosperm cells. Strongly expressed in the suspensor cells, with a weak expression also detected throughout the developing embryo.

The protein localises to the nucleus. Functionally, probable transcription factor, which may be involved in embryonic patterning. May be required for basal embryo development after fertilization. Acts partially redundantly with STIP in promoting embryonic cell division and proliferation. Promotes cotyledon boundary formation by maintaining the symmetry in CUC genes expression domains. This is WUSCHEL-related homeobox 8 from Arabidopsis thaliana (Mouse-ear cress).